The following is a 66-amino-acid chain: Cytochrome c oxidase polypeptide VIII, mitochondrial (66 aa).

Residues 1 to 17 (MLRYSLQARSALRGVRF) constitute a mitochondrion transit peptide. At 18-38 (SSSHSAPKPGSTIPFYINKKP) the chain is on the mitochondrial matrix side. Residues 39-59 (LPTLLYFGTFGVIFSIPFIVV) form a helical membrane-spanning segment. Over 60-66 (KYHNRNL) the chain is Mitochondrial intermembrane.

It belongs to the cytochrome c oxidase VIIc family. In terms of assembly, component of the cytochrome c oxidase (complex IV, CIV), a multisubunit enzyme composed of a catalytic core of 3 subunits and several supernumerary subunits. The complex exists as a monomer or a dimer and forms supercomplexes (SCs) in the inner mitochondrial membrane with ubiquinol-cytochrome c oxidoreductase (cytochrome b-c1 complex, complex III, CIII).

The protein localises to the mitochondrion inner membrane. It functions in the pathway energy metabolism; oxidative phosphorylation. Functionally, component of the cytochrome c oxidase, the last enzyme in the mitochondrial electron transport chain which drives oxidative phosphorylation. The respiratory chain contains 3 multisubunit complexes succinate dehydrogenase (complex II, CII), ubiquinol-cytochrome c oxidoreductase (cytochrome b-c1 complex, complex III, CIII) and cytochrome c oxidase (complex IV, CIV), that cooperate to transfer electrons derived from NADH and succinate to molecular oxygen, creating an electrochemical gradient over the inner membrane that drives transmembrane transport and the ATP synthase. Cytochrome c oxidase is the component of the respiratory chain that catalyzes the reduction of oxygen to water. Electrons originating from reduced cytochrome c in the intermembrane space (IMS) are transferred via the dinuclear copper A center (CU(A)) of subunit 2 and heme A of subunit 1 to the active site in subunit 1, a binuclear center (BNC) formed by heme A3 and copper B (CU(B)). The BNC reduces molecular oxygen to 2 water molecules using 4 electrons from cytochrome c in the IMS and 4 protons from the mitochondrial matrix. The protein is Cytochrome c oxidase polypeptide VIII, mitochondrial (cox8) of Schizosaccharomyces pombe (strain 972 / ATCC 24843) (Fission yeast).